A 421-amino-acid chain; its full sequence is Glutamyl-tRNA reductase (421 aa).

Residues 49 to 52, Ser-109, 114 to 116, and Gln-120 contribute to the substrate site; these read TCNR and EAQ. The Nucleophile role is filled by Cys-50. Residue 189–194 coordinates NADP(+); sequence GAGEMC.

The protein belongs to the glutamyl-tRNA reductase family. Homodimer.

The catalysed reaction is (S)-4-amino-5-oxopentanoate + tRNA(Glu) + NADP(+) = L-glutamyl-tRNA(Glu) + NADPH + H(+). It functions in the pathway porphyrin-containing compound metabolism; protoporphyrin-IX biosynthesis; 5-aminolevulinate from L-glutamyl-tRNA(Glu): step 1/2. Functionally, catalyzes the NADPH-dependent reduction of glutamyl-tRNA(Glu) to glutamate 1-semialdehyde (GSA). This is Glutamyl-tRNA reductase from Magnetococcus marinus (strain ATCC BAA-1437 / JCM 17883 / MC-1).